Reading from the N-terminus, the 219-residue chain is Elongation factor Ts, chloroplastic (219 aa).

Belongs to the EF-Ts family.

It localises to the plastid. It is found in the chloroplast. Functionally, associates with the EF-Tu.GDP complex and induces the exchange of GDP to GTP. It remains bound to the aminoacyl-tRNA.EF-Tu.GTP complex up to the GTP hydrolysis stage on the ribosome. In Guillardia theta (Cryptophyte), this protein is Elongation factor Ts, chloroplastic (tsf).